The sequence spans 329 residues: DNA-directed RNA polymerase subunit alpha (329 aa).

The alpha N-terminal domain (alpha-NTD) stretch occupies residues 1–234 (MSGSVTEFLK…EQLDAFVELR (234 aa)). The tract at residues 248–329 (FDPILLRPVD…WPPESIAEKD (82 aa)) is alpha C-terminal domain (alpha-CTD).

It belongs to the RNA polymerase alpha chain family. As to quaternary structure, homodimer. The RNAP catalytic core consists of 2 alpha, 1 beta, 1 beta' and 1 omega subunit. When a sigma factor is associated with the core the holoenzyme is formed, which can initiate transcription.

The enzyme catalyses RNA(n) + a ribonucleoside 5'-triphosphate = RNA(n+1) + diphosphate. Functionally, DNA-dependent RNA polymerase catalyzes the transcription of DNA into RNA using the four ribonucleoside triphosphates as substrates. This is DNA-directed RNA polymerase subunit alpha from Pseudoalteromonas atlantica (strain T6c / ATCC BAA-1087).